The primary structure comprises 332 residues: Adenosine deaminase (332 aa).

Zn(2+) contacts are provided by His-12 and His-14. Positions 14, 16, and 170 each coordinate substrate. Position 197 (His-197) interacts with Zn(2+). The Proton donor role is filled by Glu-200. Asp-278 contributes to the Zn(2+) binding site.

The protein belongs to the metallo-dependent hydrolases superfamily. Adenosine and AMP deaminases family. Adenosine deaminase subfamily. Requires Zn(2+) as cofactor.

The catalysed reaction is adenosine + H2O + H(+) = inosine + NH4(+). The enzyme catalyses 2'-deoxyadenosine + H2O + H(+) = 2'-deoxyinosine + NH4(+). In terms of biological role, catalyzes the hydrolytic deamination of adenosine and 2-deoxyadenosine. This chain is Adenosine deaminase, found in Clostridium perfringens (strain ATCC 13124 / DSM 756 / JCM 1290 / NCIMB 6125 / NCTC 8237 / Type A).